We begin with the raw amino-acid sequence, 79 residues long: Acyl carrier protein (79 aa).

Positions 2-77 constitute a Carrier domain; sequence STIEERVKKI…QAIDYVKSHV (76 aa). An O-(pantetheine 4'-phosphoryl)serine modification is found at Ser-37.

It belongs to the acyl carrier protein (ACP) family. In terms of processing, 4'-phosphopantetheine is transferred from CoA to a specific serine of apo-ACP by AcpS. This modification is essential for activity because fatty acids are bound in thioester linkage to the sulfhydryl of the prosthetic group.

Its subcellular location is the cytoplasm. It functions in the pathway lipid metabolism; fatty acid biosynthesis. In terms of biological role, carrier of the growing fatty acid chain in fatty acid biosynthesis. This chain is Acyl carrier protein, found in Xanthomonas oryzae pv. oryzae (strain MAFF 311018).